The primary structure comprises 805 residues: Ribosome biogenesis protein ERB1 (805 aa).

The disordered stretch occupies residues 1–105; sequence MVKGRKSQKA…SDFSEDDTKS (105 aa). Residues 8–22 are compositionally biased toward basic and acidic residues; it reads QKADKVTKAKKRVAD. Over residues 23 to 75 the composition is skewed to acidic residues; sequence EVDESESEPELQVEGLIDAEAESEDDESFESAEENASAEEDEEDEEDEEDSDA. Residues 264–382 form a required for interaction with NOP7 region; that stretch reads RFVPSKNEAK…LRKVPGYTES (119 aa). Residues 382 to 418 are required for interaction with YTM1; that stretch reads SVRERFERSLDLYLAPRMRKNKLNIDPESLIPELPSP. 7 WD repeats span residues 434–473, 482–522, 590–632, 635–673, 676–715, 719–758, and 775–805; these read GHEG…EVYR, NPED…YDIE, VCKK…TQSP, KSKG…LVKK, PGAR…TPYK, YHDK…DMMK, and GHLG…MWTT.

This sequence belongs to the WD repeat BOP1/ERB1 family. As to quaternary structure, component of the NOP7 complex, composed of ERB1, NOP7 and YTM1. The complex is held together by ERB1, which interacts with NOP7 via its N-terminal domain and with YTM1 via a high-affinity interaction between the seven-bladed beta-propeller domains of the 2 proteins. The NOP7 complex associates with the 66S pre-ribosome.

It localises to the nucleus. It is found in the nucleolus. The protein localises to the nucleoplasm. Functionally, component of the NOP7 complex, which is required for maturation of the 25S and 5.8S ribosomal RNAs and formation of the 60S ribosome. The polypeptide is Ribosome biogenesis protein ERB1 (Candida glabrata (strain ATCC 2001 / BCRC 20586 / JCM 3761 / NBRC 0622 / NRRL Y-65 / CBS 138) (Yeast)).